A 320-amino-acid polypeptide reads, in one-letter code: Phospho-N-acetylmuramoyl-pentapeptide-transferase (320 aa).

9 helical membrane-spanning segments follow: residues 5-25 (FWAFTRAFIVTVIFMPAVIKF), 51-71 (MGGALFIAAASLSALIGSVAY), 75-95 (IGFVMVLIPILAVVAYAIIGG), 121-141 (LCAVVIMIIMWIMQIPLILNI), 143-163 (FIGVFNLGIFYFIFLWFWLVG), 176-196 (GLLTGTSLIVYLVYTWIALGV), 198-218 (NHIIVIFNASIIGALVGFLLF), 241-261 (IESIVLGIPFSLLWFGLIFVI), and 300-320 (IDALFWIVTAIIGIIGILYMS).

It belongs to the glycosyltransferase 4 family. MraY subfamily. The cofactor is Mg(2+).

The protein localises to the cell membrane. It carries out the reaction UDP-N-acetyl-alpha-D-muramoyl-L-alanyl-gamma-D-glutamyl-L-lysyl-D-alanyl-D-alanine + di-trans,octa-cis-undecaprenyl phosphate = Mur2Ac(oyl-L-Ala-gamma-D-Glu-L-Lys-D-Ala-D-Ala)-di-trans,octa-cis-undecaprenyl diphosphate + UMP. It participates in cell wall biogenesis; peptidoglycan biosynthesis. Catalyzes the initial step of the lipid cycle reactions in the biosynthesis of the cell wall peptidoglycan: transfers peptidoglycan precursor phospho-MurNAc-pentapeptide from UDP-MurNAc-pentapeptide onto the lipid carrier undecaprenyl phosphate, yielding undecaprenyl-pyrophosphoryl-MurNAc-pentapeptide, known as lipid I. In Leuconostoc mesenteroides subsp. mesenteroides (strain ATCC 8293 / DSM 20343 / BCRC 11652 / CCM 1803 / JCM 6124 / NCDO 523 / NBRC 100496 / NCIMB 8023 / NCTC 12954 / NRRL B-1118 / 37Y), this protein is Phospho-N-acetylmuramoyl-pentapeptide-transferase.